A 103-amino-acid chain; its full sequence is Small ribosomal subunit protein uS10 (103 aa).

This sequence belongs to the universal ribosomal protein uS10 family. In terms of assembly, part of the 30S ribosomal subunit.

Involved in the binding of tRNA to the ribosomes. The protein is Small ribosomal subunit protein uS10 of Chromobacterium violaceum (strain ATCC 12472 / DSM 30191 / JCM 1249 / CCUG 213 / NBRC 12614 / NCIMB 9131 / NCTC 9757 / MK).